The primary structure comprises 292 residues: Elongation factor Ts (292 aa).

The segment at 82–85 (TDFV) is involved in Mg(2+) ion dislocation from EF-Tu.

Belongs to the EF-Ts family.

The protein localises to the cytoplasm. In terms of biological role, associates with the EF-Tu.GDP complex and induces the exchange of GDP to GTP. It remains bound to the aminoacyl-tRNA.EF-Tu.GTP complex up to the GTP hydrolysis stage on the ribosome. The polypeptide is Elongation factor Ts (Bordetella bronchiseptica (strain ATCC BAA-588 / NCTC 13252 / RB50) (Alcaligenes bronchisepticus)).